We begin with the raw amino-acid sequence, 664 residues long: Macoilin-1 (664 aa).

A run of 4 helical transmembrane segments spans residues 28 to 48 (TFLY…DFVL), 75 to 95 (AFSV…LLFI), 120 to 140 (VCLP…AIRF), and 154 to 174 (FAAH…KSYV). The tract at residues 206–225 (QMLQRQERETEEATSKGMSE) is disordered. Positions 210-219 (RQERETEEAT) are enriched in basic and acidic residues. N-linked (GlcNAc...) asparagine glycosylation is found at asparagine 234, asparagine 336, asparagine 339, asparagine 348, and asparagine 655. Disordered regions lie at residues 315-364 (VGAG…LAPH) and 644-664 (FMDT…PLKK). Residues 334-348 (SHNSTNGSVPSSSSN) are compositionally biased toward low complexity. Positions 644 to 658 (FMDTSPSSLDPNASV) are enriched in polar residues.

It belongs to the macoilin family.

It localises to the nucleus membrane. It is found in the rough endoplasmic reticulum membrane. Functionally, may play a role in the regulation of neuronal activity. The chain is Macoilin-1 from Danio rerio (Zebrafish).